The chain runs to 201 residues: Small ribosomal subunit protein uS4 (201 aa).

A disordered region spans residues 19–41; sequence LVGGSSAYEKRPYPPGQHGRARI. The 67-residue stretch at 91 to 157 folds into the S4 RNA-binding domain; the sequence is SRLDNVVYRA…LPFEVARETA (67 aa).

Belongs to the universal ribosomal protein uS4 family. Part of the 30S ribosomal subunit. Contacts protein S5. The interaction surface between S4 and S5 is involved in control of translational fidelity.

In terms of biological role, one of the primary rRNA binding proteins, it binds directly to 16S rRNA where it nucleates assembly of the body of the 30S subunit. Its function is as follows. With S5 and S12 plays an important role in translational accuracy. This chain is Small ribosomal subunit protein uS4, found in Mycobacteroides abscessus (strain ATCC 19977 / DSM 44196 / CCUG 20993 / CIP 104536 / JCM 13569 / NCTC 13031 / TMC 1543 / L948) (Mycobacterium abscessus).